Consider the following 171-residue polypeptide: Shikimate kinase (171 aa).

14 to 19 (GAGKST) provides a ligand contact to ATP. Serine 18 is a binding site for Mg(2+). Residues aspartate 36, arginine 60, and glycine 82 each coordinate substrate. Residue arginine 120 participates in ATP binding. Arginine 139 provides a ligand contact to substrate. Glutamine 156 lines the ATP pocket.

This sequence belongs to the shikimate kinase family. In terms of assembly, monomer. It depends on Mg(2+) as a cofactor.

Its subcellular location is the cytoplasm. The catalysed reaction is shikimate + ATP = 3-phosphoshikimate + ADP + H(+). It participates in metabolic intermediate biosynthesis; chorismate biosynthesis; chorismate from D-erythrose 4-phosphate and phosphoenolpyruvate: step 5/7. Catalyzes the specific phosphorylation of the 3-hydroxyl group of shikimic acid using ATP as a cosubstrate. This is Shikimate kinase from Pseudoalteromonas atlantica (strain T6c / ATCC BAA-1087).